Consider the following 490-residue polypeptide: ATP synthase subunit beta, chloroplastic (490 aa).

An ATP-binding site is contributed by 170–177 (GGAGVGKT).

This sequence belongs to the ATPase alpha/beta chains family. F-type ATPases have 2 components, CF(1) - the catalytic core - and CF(0) - the membrane proton channel. CF(1) has five subunits: alpha(3), beta(3), gamma(1), delta(1), epsilon(1). CF(0) has four main subunits: a(1), b(1), b'(1) and c(9-12).

Its subcellular location is the plastid. It is found in the chloroplast thylakoid membrane. The catalysed reaction is ATP + H2O + 4 H(+)(in) = ADP + phosphate + 5 H(+)(out). Its function is as follows. Produces ATP from ADP in the presence of a proton gradient across the membrane. The catalytic sites are hosted primarily by the beta subunits. The sequence is that of ATP synthase subunit beta, chloroplastic from Ipomoea quamoclit (Cypress vine).